A 555-amino-acid chain; its full sequence is Dynein regulatory complex protein 11 (555 aa).

IQ domains follow at residues 154 to 183 (EDEA…TKRQ) and 199 to 226 (HEEA…ADKE). 4 disordered regions span residues 232-255 (MKPK…MRRK), 299-377 (KRNP…EQKI), 450-469 (AAKL…EPFS), and 501-555 (AKKD…SCGA). Composition is skewed to basic and acidic residues over residues 235–244 (KPRDPKRDPQ) and 338–367 (GDGK…KGGG). The span at 452–464 (KLGKKGKKKKGKK) shows a compositional bias: basic residues. Residues 501–521 (AKKDEKDAAGDGKGKGKDGKG) show a composition bias toward basic and acidic residues. Residues 537 to 546 (KKKKGGKKKS) are compositionally biased toward basic residues.

It belongs to the AAA ATPase family. DRC11 subfamily. In terms of assembly, component of the nexin-dynein regulatory complex (N-DRC). Interacts with DRC5.

Its subcellular location is the cytoplasm. The protein resides in the cytoskeleton. The protein localises to the flagellum axoneme. Component of the nexin-dynein regulatory complex (N-DRC), a key regulator of ciliary/flagellar motility which maintains the alignment and integrity of the distal axoneme and regulates microtubule sliding in motile axonemes. This Chlamydomonas reinhardtii (Chlamydomonas smithii) protein is Dynein regulatory complex protein 11.